The following is a 529-amino-acid chain: Serine hydroxymethyltransferase 3, chloroplastic (529 aa).

The transit peptide at 1-60 directs the protein to the chloroplast; it reads MQACCGGNSMASLQQPGRVQGSVFPPIMPPVTKFSQQLKFNISKPFRSSFLKRNLVSEMR. Lysine 314 bears the N6-(pyridoxal phosphate)lysine mark.

Belongs to the SHMT family. Homotetramer. It depends on pyridoxal 5'-phosphate as a cofactor.

The protein localises to the plastid. Its subcellular location is the chloroplast. It catalyses the reaction (6R)-5,10-methylene-5,6,7,8-tetrahydrofolate + glycine + H2O = (6S)-5,6,7,8-tetrahydrofolate + L-serine. Its pathway is one-carbon metabolism; tetrahydrofolate interconversion. With respect to regulation, inhibited by 5-CH3-H4PteGlu1/5 and 5-HCO-H4PteGlu1/5 in vitro. Functionally, catalyzes the interconversion of serine and glycine and directs the hydroxymethyl moiety of serine into the metabolic network of H4PteGlu(n)-bound one-carbon units. The polypeptide is Serine hydroxymethyltransferase 3, chloroplastic (Arabidopsis thaliana (Mouse-ear cress)).